Here is an 808-residue protein sequence, read N- to C-terminus: N-terminal kinase-like protein (808 aa).

Positions 14-314 (FELIPEPPEG…PEDFCRHKVL (301 aa)) constitute a Protein kinase domain. HEAT repeat units follow at residues 350-388 (IIPV…VNTQ), 389-427 (IFPH…LNVE), and 507-545 (ILPV…EDPT). Disordered stretches follow at residues 540-566 (VSED…GGAA), 587-646 (SHPT…RWDD), and 658-808 (SVLA…RKLD). Over residues 556-566 (AASSPGMGGAA) the composition is skewed to low complexity. The segment covering 587–600 (SHPTTAPTETNIPQ) has biased composition (polar residues). The span at 601 to 617 (RPTPEGVPAPAPTPVPA) shows a compositional bias: pro residues. Residues 660-680 (LAQQDDWSTGGQVSRASQVSN) show a composition bias toward polar residues. Over residues 681-690 (SDHKSSKSPE) the composition is skewed to basic and acidic residues. A Phosphoserine modification is found at serine 754. Residues 755-764 (WGEDNWEGLE) are compositionally biased toward acidic residues. A coiled-coil region spans residues 761–797 (EGLETDSRQVKAELARKKREERRREMEAKRAERKVAK). Basic and acidic residues-rich tracts occupy residues 765-775 (TDSRQVKAELA) and 782-795 (RRRE…ERKV). Positions 793–808 (RKVAKGPMKLGARKLD) are interaction with COPB1.

Belongs to the protein kinase superfamily. As to quaternary structure, interacts with GORAB. Interacts with COPA, COPB1 and COPB2. Homooligomer. Interacts with AP2B1. As to expression, ubiquitous.

The protein resides in the cytoplasm. It localises to the cytoskeleton. Its subcellular location is the microtubule organizing center. It is found in the centrosome. The protein localises to the endoplasmic reticulum-Golgi intermediate compartment. The protein resides in the golgi apparatus. It localises to the cis-Golgi network. Its subcellular location is the nucleus. In terms of biological role, regulates COPI-mediated retrograde protein traffic at the interface between the Golgi apparatus and the endoplasmic reticulum. Involved in the maintenance of the Golgi apparatus morphology. Functionally, acts as a transcriptional activator. It binds to three different types of GC-rich DNA binding sites (box-A, -B and -C) in the beta-polymerase promoter region. It also binds to the TERT promoter region. The sequence is that of N-terminal kinase-like protein (SCYL1) from Homo sapiens (Human).